The primary structure comprises 310 residues: Acetylglutamate kinase (310 aa).

Residues 70 to 71 (GG), R92, and N191 contribute to the substrate site.

The protein belongs to the acetylglutamate kinase family. ArgB subfamily.

The protein localises to the cytoplasm. It carries out the reaction N-acetyl-L-glutamate + ATP = N-acetyl-L-glutamyl 5-phosphate + ADP. Its pathway is amino-acid biosynthesis; L-arginine biosynthesis; N(2)-acetyl-L-ornithine from L-glutamate: step 2/4. Functionally, catalyzes the ATP-dependent phosphorylation of N-acetyl-L-glutamate. The polypeptide is Acetylglutamate kinase (Corynebacterium diphtheriae (strain ATCC 700971 / NCTC 13129 / Biotype gravis)).